Reading from the N-terminus, the 477-residue chain is Tripartite motif-containing protein 72 (477 aa).

Residues Cys14, Cys17, Cys29, His31, Cys34, Cys37, Cys53, Cys56, Cys86, His89, Cys97, Asp100, Cys105, Cys108, His114, and His117 each contribute to the Zn(2+) site. The RING-type zinc finger occupies 14–57 (CPLCLQLFDAPVTAECGHSFCRACLSRVAGEPAADGTVNCPCCQ). A B box-type zinc finger spans residues 81 to 122 (VPQGHCEEHLDPLSIYCEQDRVLVCGVCASLGSHRGHRLLPA). Residues 135–232 (QQKLQLQEAS…EKVLEEVADK (98 aa)) adopt a coiled-coil conformation. Ser255 is subject to Phosphoserine. Residues 271 to 475 (DFKFQVWRKM…PLLLVGPDGQ (205 aa)) form the B30.2/SPRY domain.

The protein belongs to the TRIM/RBCC family. In terms of assembly, homodimer. Homooligomer; disulfide-linked. Oligomerizes on the phospholipid membrane. Interacts with DYSF and CAV3. Disulfide bond formation at Cys-242 occurs in case of membrane damage that cause the entry of the oxidized milieu of the extracellular space, resulting in homooligomerization. As to expression, muscle-specific.

The protein localises to the cell membrane. Its subcellular location is the sarcolemma. It localises to the cytoplasmic vesicle membrane. It carries out the reaction S-ubiquitinyl-[E2 ubiquitin-conjugating enzyme]-L-cysteine + [acceptor protein]-L-lysine = [E2 ubiquitin-conjugating enzyme]-L-cysteine + N(6)-ubiquitinyl-[acceptor protein]-L-lysine.. It functions in the pathway protein modification; protein ubiquitination. Specifically binds phosphatidylserine. The binding to phospholipids enhances ubiquitination activity. Functionally, muscle-specific E3 ubiquitin-protein ligase that plays a central role in cell membrane repair by nucleating the assembly of the repair machinery at injury sites. Its ubiquitination activity is mediated by E2 ubiquitin-conjugating enzymes UBE2D1, UBE2D2 and UBE2D3. Acts as a sensor of oxidation: upon membrane damage, entry of extracellular oxidative environment results in disulfide bond formation and homooligomerization at the injury site. This oligomerization acts as a nucleation site for recruitment of TRIM72-containing vesicles to the injury site, leading to membrane patch formation. Probably acts upstream of the Ca(2+)-dependent membrane resealing process. Required for transport of DYSF to sites of cell injury during repair patch formation. Regulates membrane budding and exocytosis. May be involved in the regulation of the mobility of KCNB1-containing endocytic vesicles. This is Tripartite motif-containing protein 72 from Oryctolagus cuniculus (Rabbit).